We begin with the raw amino-acid sequence, 127 residues long: Large ribosomal subunit protein bL17 (127 aa).

The protein belongs to the bacterial ribosomal protein bL17 family. As to quaternary structure, part of the 50S ribosomal subunit. Contacts protein L32.

The sequence is that of Large ribosomal subunit protein bL17 from Stenotrophomonas maltophilia (strain K279a).